The primary structure comprises 233 residues: Large ribosomal subunit protein uL1 (233 aa).

The protein belongs to the universal ribosomal protein uL1 family. As to quaternary structure, part of the 50S ribosomal subunit.

In terms of biological role, binds directly to 23S rRNA. The L1 stalk is quite mobile in the ribosome, and is involved in E site tRNA release. Functionally, protein L1 is also a translational repressor protein, it controls the translation of the L11 operon by binding to its mRNA. This chain is Large ribosomal subunit protein uL1, found in Shewanella baltica (strain OS185).